The primary structure comprises 188 residues: dCTP deaminase (188 aa).

Residues 111 to 116 (KSTYAR), 135 to 137 (TLE), Q156, Y170, and Q180 contribute to the dCTP site. E137 serves as the catalytic Proton donor/acceptor.

It belongs to the dCTP deaminase family. Homotrimer.

The enzyme catalyses dCTP + H2O + H(+) = dUTP + NH4(+). It participates in pyrimidine metabolism; dUMP biosynthesis; dUMP from dCTP (dUTP route): step 1/2. Catalyzes the deamination of dCTP to dUTP. The protein is dCTP deaminase of Francisella tularensis subsp. tularensis (strain FSC 198).